A 493-amino-acid polypeptide reads, in one-letter code: Ribulose bisphosphate carboxylase large chain (493 aa).

Asn132 lines the substrate pocket. At Cys181 the chain carries S-nitrosocysteine. Thr182 provides a ligand contact to substrate. The active-site Proton acceptor is Lys184. Lys186 contributes to the substrate binding site. Positions 210, 212, and 213 each coordinate Mg(2+). Lys210 carries the N6-carboxylysine modification. His302 acts as the Proton acceptor in catalysis. Residues Arg303, His335, and Ser387 each coordinate substrate. Cys460 is modified (S-nitrosocysteine).

It belongs to the RuBisCO large chain family. Type I subfamily. In terms of assembly, heterohexadecamer of 8 large chains and 8 small chains. It depends on Mg(2+) as a cofactor.

The protein localises to the plastid. Its subcellular location is the chloroplast. It catalyses the reaction 2 (2R)-3-phosphoglycerate + 2 H(+) = D-ribulose 1,5-bisphosphate + CO2 + H2O. The enzyme catalyses D-ribulose 1,5-bisphosphate + O2 = 2-phosphoglycolate + (2R)-3-phosphoglycerate + 2 H(+). In terms of biological role, ruBisCO catalyzes two reactions: the carboxylation of D-ribulose 1,5-bisphosphate, the primary event in carbon dioxide fixation, as well as the oxidative fragmentation of the pentose substrate in the photorespiration process. Both reactions occur simultaneously and in competition at the same active site. Carbon dioxide and oxygen bind in the same pocket of the enzyme in a similar manner. The protein is Ribulose bisphosphate carboxylase large chain of Galdieria sulphuraria (Red alga).